Reading from the N-terminus, the 382-residue chain is Mating-type protein a-1 (382 aa).

Residues 116–184 (IPRPPNAYIL…RLLLENPDYR (69 aa)) constitute a DNA-binding region (HMG box).

Binds in vitro to DNA containing a specific core sequence 5'-CTTTG-3'.

The protein localises to the nucleus. Mating type proteins are sequence specific DNA-binding proteins that act as master switches in yeast differentiation by controlling gene expression in a cell type-specific fashion. Transcriptional activator that induces the transcription of a-specific genes like mating factor mfa-1. Required for mating as an a-cell, blocking of heterokaryon formation (vegetative incompatibility) and for perithecium induction. The polypeptide is Mating-type protein a-1 (mta-1) (Neurospora crassa).